We begin with the raw amino-acid sequence, 363 residues long: Phosphoserine aminotransferase (363 aa).

Residue arginine 42 participates in L-glutamate binding. Pyridoxal 5'-phosphate contacts are provided by residues 76–77 (AR), tryptophan 104, threonine 155, aspartate 175, and glutamine 198. Lysine 199 is subject to N6-(pyridoxal phosphate)lysine. 240-241 (NT) is a pyridoxal 5'-phosphate binding site.

This sequence belongs to the class-V pyridoxal-phosphate-dependent aminotransferase family. SerC subfamily. Homodimer. Pyridoxal 5'-phosphate is required as a cofactor.

Its subcellular location is the cytoplasm. The enzyme catalyses O-phospho-L-serine + 2-oxoglutarate = 3-phosphooxypyruvate + L-glutamate. The catalysed reaction is 4-(phosphooxy)-L-threonine + 2-oxoglutarate = (R)-3-hydroxy-2-oxo-4-phosphooxybutanoate + L-glutamate. Its pathway is amino-acid biosynthesis; L-serine biosynthesis; L-serine from 3-phospho-D-glycerate: step 2/3. The protein operates within cofactor biosynthesis; pyridoxine 5'-phosphate biosynthesis; pyridoxine 5'-phosphate from D-erythrose 4-phosphate: step 3/5. Catalyzes the reversible conversion of 3-phosphohydroxypyruvate to phosphoserine and of 3-hydroxy-2-oxo-4-phosphonooxybutanoate to phosphohydroxythreonine. The sequence is that of Phosphoserine aminotransferase (serC) from Edwardsiella ictaluri (strain 93-146).